The sequence spans 187 residues: Peptide deformylase (187 aa).

Residues Cys-107 and His-149 each contribute to the Fe cation site. Residue Glu-150 is part of the active site. His-153 is a binding site for Fe cation.

It belongs to the polypeptide deformylase family. Fe(2+) is required as a cofactor.

The enzyme catalyses N-terminal N-formyl-L-methionyl-[peptide] + H2O = N-terminal L-methionyl-[peptide] + formate. Removes the formyl group from the N-terminal Met of newly synthesized proteins. Requires at least a dipeptide for an efficient rate of reaction. N-terminal L-methionine is a prerequisite for activity but the enzyme has broad specificity at other positions. This is Peptide deformylase from Microchaete diplosiphon (Fremyella diplosiphon).